A 348-amino-acid polypeptide reads, in one-letter code: Gamma-glutamyl hydrolase 1 (348 aa).

The first 23 residues, 1–23 (MIDNNCLYKEELNRNSYSGLAKE), serve as a signal peptide directing secretion. Residues 46-342 (SPDPNLNYRP…RGYDEVYIFT (297 aa)) enclose the Gamma-glutamyl hydrolase domain. C156 (nucleophile) is an active-site residue. Residue H269 is part of the active site.

This sequence belongs to the peptidase C26 family. As to expression, highly expressed in roots and at lower levels in leaves, stems and siliques.

It localises to the vacuole. The protein resides in the secreted. Its subcellular location is the extracellular space. The protein localises to the cell wall. It carries out the reaction (6S)-5,6,7,8-tetrahydrofolyl-(gamma-L-Glu)(n) + (n-1) H2O = (6S)-5,6,7,8-tetrahydrofolate + (n-1) L-glutamate. Cleaves the polyglutamate sidechains of folate polyglutamates in the vacuole. Is important for polyglutamyl tail length determination before vacuolar exit. Plays a role in folate stability and intracellular folate content. This is Gamma-glutamyl hydrolase 1 (GGH1) from Arabidopsis thaliana (Mouse-ear cress).